Reading from the N-terminus, the 238-residue chain is MLVIPAIDLIGGEVVRLEKGDFAKKTVYARDPAEKAAELVRDGATLIHVVDLDGAKAGWPVNLDAVRAICAVPGAEVELGGGLRSLPDIEKVLELGVRYVVLGTAAVERLDLVRQACARFPGRVRSGIDARNGEVKIAGWLEGTGLGAAEVARRVKEAGVGLVEYTDVGRDGMFTGVDADGAARLQAEAGVQVVASGGVASLDDVRACRAAGLAGVIVGKALYEGRIALADAVRTAAE.

The active-site Proton acceptor is the Asp8. The active-site Proton donor is Asp129.

This sequence belongs to the HisA/HisF family.

It localises to the cytoplasm. The catalysed reaction is 1-(5-phospho-beta-D-ribosyl)-5-[(5-phospho-beta-D-ribosylamino)methylideneamino]imidazole-4-carboxamide = 5-[(5-phospho-1-deoxy-D-ribulos-1-ylimino)methylamino]-1-(5-phospho-beta-D-ribosyl)imidazole-4-carboxamide. It participates in amino-acid biosynthesis; L-histidine biosynthesis; L-histidine from 5-phospho-alpha-D-ribose 1-diphosphate: step 4/9. This Anaeromyxobacter dehalogenans (strain 2CP-C) protein is 1-(5-phosphoribosyl)-5-[(5-phosphoribosylamino)methylideneamino] imidazole-4-carboxamide isomerase.